The primary structure comprises 1233 residues: uncharacterized protein (1233 aa).

7 disordered regions span residues 1-39 (MVESLTVENQEHNVQPPSVTSAGDSYSTLATDLPLPSTN), 65-116 (QELS…DAIS), 160-211 (AEGT…TDLS), 250-577 (EKMD…DAPR), 594-825 (DLEV…NSEK), 851-872 (NKENEDVEVDTEEDAEVENSEK), and 902-955 (EDVE…ENSK). The segment covering 72–83 (KSSKLKGHKKKN) has biased composition (basic residues). S180 carries the post-translational modification Phosphoserine. The span at 183-199 (TRRKKNKKKKTTNRRGR) shows a compositional bias: basic residues. A compositionally biased stretch (polar residues) spans 201-211 (SSNPADTTDLS). 2 stretches are compositionally biased toward basic and acidic residues: residues 250–280 (EKMDIRTRNESSDKTFDIDVPNKDNVDETSS) and 287–300 (NEEKAEHTLPREEN). Residues 329–345 (GQASTKDVESESLTKNG) are compositionally biased toward polar residues. Basic and acidic residues-rich tracts occupy residues 349-370 (KENESKHLKAGEKQQTESDRDG) and 379-408 (NQKETEIGKEDHVFEQKDKEDEKCRKELSV). Residues 409–422 (NHENNMSHNFNAAG) show a composition bias toward polar residues. S462 is subject to Phosphoserine. Positions 466–478 (EKEEEEEEEEEEN) are enriched in acidic residues. Composition is skewed to basic and acidic residues over residues 484–497 (VKKENVTGEQEAVR), 508–527 (STSKGEEIMGGDEKQSEAGE), 594–622 (DLEVAKEDQEGEQVKLDEPVKAMKDDKIA), 631–672 (EDMK…KTPE), and 684–711 (RPEDLQINERDPEVLKEDVRVPDEDVKP). Position 523 is a phosphoserine (S523). Residues 728 to 739 (QRVQISTEQAET) show a composition bias toward polar residues. Residues 753–783 (FKEEEKPKRFEITQEGDKITGKDTNHEHGEA) show a composition bias toward basic and acidic residues. Over residues 855-868 (EDVEVDTEEDAEVE) the composition is skewed to acidic residues. Phosphothreonine is present on T861. 2 stretches are compositionally biased toward basic and acidic residues: residues 910 to 920 (SKEDIETKCSE) and 935 to 948 (EVSKKDAEAVTKED). The residue at position 975 (S975) is a Phosphoserine. Disordered regions lie at residues 984-1071 (LPEL…PKKA) and 1109-1128 (KDSTTQTTEQSKKNNDKPQD). Over residues 986 to 999 (ELEKQDIKDNKGED) the composition is skewed to basic and acidic residues. A phosphoserine mark is found at S1037 and S1046. Basic and acidic residues-rich tracts occupy residues 1062 to 1071 (QSTRENPKKA) and 1118 to 1127 (QSKKNNDKPQ). The Glutaredoxin domain maps to 1132-1233 (TSEIRKLNEK…KLRELIYDTI (102 aa)).

This is an uncharacterized protein from Saccharomyces cerevisiae (strain ATCC 204508 / S288c) (Baker's yeast).